A 774-amino-acid chain; its full sequence is Ion-translocating oxidoreductase complex subunit C (774 aa).

4Fe-4S ferredoxin-type domains are found at residues 369-397 (GEPQEEQSCIRCSACADACPADLLPQQLY) and 407-436 (KATTHNIADCIECGACAWVCPSNIPLVQYF). Residues Cys377, Cys380, Cys383, Cys387, Cys416, Cys419, Cys422, and Cys426 each contribute to the [4Fe-4S] cluster site. Residues 602–750 (KLEQQQANAE…EPEEQIDPRK (149 aa)) are disordered.

It belongs to the 4Fe4S bacterial-type ferredoxin family. RnfC subfamily. In terms of assembly, the complex is composed of six subunits: RsxA, RsxB, RsxC, RsxD, RsxE and RsxG. [4Fe-4S] cluster serves as cofactor.

The protein resides in the cell inner membrane. Part of a membrane-bound complex that couples electron transfer with translocation of ions across the membrane. Required to maintain the reduced state of SoxR. The sequence is that of Ion-translocating oxidoreductase complex subunit C from Escherichia coli O6:K15:H31 (strain 536 / UPEC).